The chain runs to 597 residues: Phosphomethylpyrimidine synthase (597 aa).

Substrate-binding positions include Asn-207, Met-236, Tyr-265, His-301, 321-323 (SRG), 362-365 (DGLR), and Glu-401. Residue His-405 participates in Zn(2+) binding. Tyr-428 provides a ligand contact to substrate. A Zn(2+)-binding site is contributed by His-469. Cys-549, Cys-552, and Cys-557 together coordinate [4Fe-4S] cluster.

Belongs to the ThiC family. Homodimer. It depends on [4Fe-4S] cluster as a cofactor.

The enzyme catalyses 5-amino-1-(5-phospho-beta-D-ribosyl)imidazole + S-adenosyl-L-methionine = 4-amino-2-methyl-5-(phosphooxymethyl)pyrimidine + CO + 5'-deoxyadenosine + formate + L-methionine + 3 H(+). It functions in the pathway cofactor biosynthesis; thiamine diphosphate biosynthesis. Its function is as follows. Catalyzes the synthesis of the hydroxymethylpyrimidine phosphate (HMP-P) moiety of thiamine from aminoimidazole ribotide (AIR) in a radical S-adenosyl-L-methionine (SAM)-dependent reaction. The sequence is that of Phosphomethylpyrimidine synthase from Gluconobacter oxydans (strain 621H) (Gluconobacter suboxydans).